We begin with the raw amino-acid sequence, 396 residues long: MAGSSPRQVAVFGATGSIGTSALDVIARHPERLRASVLSAGSKVDELLALCATHRPAHALIADATLYPALRDGLRARGLATQAHAGAEALDALASSDACDTVVAAIVGAAGLPSTLAAARAGKRLLLANKESLVLAGELLTRTAAAAGAEIIPIDSEHSAIFQCLRSCDASRGVRRVILTASGGPFRGRDRAALAAVTPAQAVAHPKWSMGPKISVDSATLMNKGLEVIEAHHLFGLPGEQIDVLVHPQSLVHSLVEFVDGSTLAQLGLPDMRTTLAVGLAWPERVESGVGGLDLLSQGRLDFEAPDTAAFPCLRLAWDALRAGGTAPAILNAANEVAVSAFLQGQVGFLAIPALVEHTLTTLQRHNADSLDTLLFADAQARQITERALAHHALHA.

NADPH is bound by residues Thr-15, Gly-16, Ser-17, Ile-18, Gly-41, and Asn-129. Lys-130 serves as a coordination point for 1-deoxy-D-xylulose 5-phosphate. Glu-131 is an NADPH binding site. Asp-155 contacts Mn(2+). 4 residues coordinate 1-deoxy-D-xylulose 5-phosphate: Ser-156, Glu-157, Ser-182, and His-205. A Mn(2+)-binding site is contributed by Glu-157. Gly-211 serves as a coordination point for NADPH. 1-deoxy-D-xylulose 5-phosphate contacts are provided by Ser-218, Asn-223, Lys-224, and Glu-227. Mn(2+) is bound at residue Glu-227.

It belongs to the DXR family. Mg(2+) serves as cofactor. Mn(2+) is required as a cofactor.

The catalysed reaction is 2-C-methyl-D-erythritol 4-phosphate + NADP(+) = 1-deoxy-D-xylulose 5-phosphate + NADPH + H(+). It functions in the pathway isoprenoid biosynthesis; isopentenyl diphosphate biosynthesis via DXP pathway; isopentenyl diphosphate from 1-deoxy-D-xylulose 5-phosphate: step 1/6. Its function is as follows. Catalyzes the NADPH-dependent rearrangement and reduction of 1-deoxy-D-xylulose-5-phosphate (DXP) to 2-C-methyl-D-erythritol 4-phosphate (MEP). This chain is 1-deoxy-D-xylulose 5-phosphate reductoisomerase, found in Xanthomonas axonopodis pv. citri (strain 306).